A 219-amino-acid polypeptide reads, in one-letter code: Probable transaldolase (219 aa).

The active-site Schiff-base intermediate with substrate is the Lys-83.

The protein belongs to the transaldolase family. Type 3B subfamily.

The protein resides in the cytoplasm. It catalyses the reaction D-sedoheptulose 7-phosphate + D-glyceraldehyde 3-phosphate = D-erythrose 4-phosphate + beta-D-fructose 6-phosphate. It functions in the pathway carbohydrate degradation; pentose phosphate pathway; D-glyceraldehyde 3-phosphate and beta-D-fructose 6-phosphate from D-ribose 5-phosphate and D-xylulose 5-phosphate (non-oxidative stage): step 2/3. Its function is as follows. Transaldolase is important for the balance of metabolites in the pentose-phosphate pathway. This chain is Probable transaldolase, found in Cereibacter sphaeroides (strain ATCC 17025 / ATH 2.4.3) (Rhodobacter sphaeroides).